Reading from the N-terminus, the 681-residue chain is Propionyl-CoA carboxylase alpha chain (681 aa).

In terms of domain architecture, Biotin carboxylation spans 1–466 (MFNKILIANR…TTAFIAEEYP (466 aa)). ATP-binding positions include lysine 116, 148-209 (SNQI…PRHI), glutamate 200, and asparagine 235. The region spanning 120 to 317 (KKIAQEANVS…LVEQMIRVAA (198 aa)) is the ATP-grasp domain. Residues glutamate 275, glutamate 288, and asparagine 290 each coordinate Mg(2+). Residues glutamate 275, glutamate 288, and asparagine 290 each coordinate Mn(2+). Glutamate 288 is an active-site residue. Residue phenylalanine 348 coordinates biotin. The Biotinyl-binding domain maps to 602 to 681 (LMPEKLPPDT…AVDDVIMEFE (80 aa)). Lysine 647 carries the post-translational modification N6-biotinyllysine.

As to quaternary structure, the holoenzyme is a dodecamer composed of 6 PccA/alpha subunits and 6 PccB/beta subunits. The cofactor is Mg(2+). Requires Mn(2+) as cofactor. Biotin is required as a cofactor. In terms of processing, the biotin cofactor is covalently attached to the C-terminal biotinyl-binding domain and is required for the catalytic activity.

It carries out the reaction propanoyl-CoA + hydrogencarbonate + ATP = (S)-methylmalonyl-CoA + ADP + phosphate + H(+). The protein operates within metabolic intermediate metabolism; propanoyl-CoA degradation; succinyl-CoA from propanoyl-CoA: step 1/3. In terms of biological role, this is one of the 2 subunits of the biotin-dependent propionyl-CoA carboxylase (PCC), the enzyme catalyzing the carboxylation of propionyl-CoA/propanoyl-CoA to D-methylmalonyl-CoA/(S)-methylmalonyl-CoA. Within the holoenzyme, the alpha subunit catalyzes the ATP-dependent carboxylation of the biotin carried by the biotin carboxyl carrier (BCC) domain, while the beta subunit then tranfers the carboxyl group from carboxylated biotin to propionyl-CoA. This is Propionyl-CoA carboxylase alpha chain from Ruegeria pomeroyi (strain ATCC 700808 / DSM 15171 / DSS-3) (Silicibacter pomeroyi).